We begin with the raw amino-acid sequence, 122 residues long: LYR motif-containing protein 1 (122 aa).

The protein belongs to the complex I LYR family.

May promote cell proliferation and inhibition of apoptosis of preadipocytes. This is LYR motif-containing protein 1 (Lyrm1) from Rattus norvegicus (Rat).